A 255-amino-acid polypeptide reads, in one-letter code: Enkurin (255 aa).

Polar residues predominate over residues 1–10 (MDSPCTSESI). Disordered regions lie at residues 1 to 25 (MDSPCTSESIYNLIPSDLKEPPQHP) and 67 to 96 (SKEKTLPPKKKFNRCSPKKPAVPLRTDHPV). Basic residues predominate over residues 73–83 (PPKKKFNRCSP). Positions 83–89 (PKKPAVP) match the SH3-binding motif. Residues 160–252 (KRNEDVKKAQ…VIEKHKIIYI (93 aa)) enclose the Enkurin domain. An interaction with TRPC proteins region spans residues 160 to 255 (KRNEDVKKAQ…KHKIIYIANK (96 aa)). The IQ domain maps to 176 to 187 (IQENLKKAAMKR).

Microtubule inner protein component of sperm flagellar doublet microtubules. Binds calmodulin via its IQ domain. Interacts with TRPC1, TRPC2, TRPC5, but not TRPC3. Interacts with CFAP45. In terms of tissue distribution, high expression in testis and vomeronasal organ and lower expression in ovary, heart, lung, and brain. Not expressed in other tissues.

The protein localises to the cytoplasm. It is found in the cytoskeleton. It localises to the cilium axoneme. The protein resides in the flagellum axoneme. Adapter that functions to localize a calcium-sensitive signal transduction machinery in sperm to a calcium-permeable ion channel. Microtubule inner protein (MIP) part of the dynein-decorated doublet microtubules (DMTs) in cilia axoneme, which is required for motile cilia beating. The chain is Enkurin (Enkur) from Mus musculus (Mouse).